Consider the following 942-residue polypeptide: Protein ZDS2 (942 aa).

The tract at residues 1-28 (MVLMEDMQNKDGHNTVENSSGGTDSNNN) is disordered. The span at 15–28 (TVENSSGGTDSNNN) shows a compositional bias: polar residues. Serine 50 bears the Phosphoserine mark. Disordered regions lie at residues 91–142 (SRNS…DDSI), 483–541 (SQES…NSSN), 617–654 (VVSS…KNSL), 682–728 (VKKE…DIDT), and 788–817 (SRDT…ISTL). Positions 99-122 (SSKESLQESLHEENIIRSEQKEEQ) are enriched in basic and acidic residues. Residues 123–134 (GSEDNDAYEEGD) are compositionally biased toward acidic residues. 3 stretches are compositionally biased toward low complexity: residues 483 to 497 (SQES…SNNS), 518 to 541 (SSSE…NSSN), and 617 to 627 (VVSSSESQPSK). A compositionally biased stretch (basic residues) spans 682–704 (VKKELKKKASHSSLSKFRKSPKK). A compositionally biased stretch (polar residues) spans 807-816 (TSPTAPQIST).

To yeast ZDS1/NRC1/CES1. In terms of assembly, interacts with SKG6.

In terms of biological role, acts as a negative regulator of polarized growth via an alternative mechanism to ZDS1. In heat-stressed cells appears to play a role in localizing BCY1 to the cytoplasm. Seems to interact with, and down-regulate, CDC42. Also acts as a suppressor of PKC1. May act as an integration point for distinct signaling pathways helping to maintain a balance among these different pathways. The chain is Protein ZDS2 (ZDS2) from Saccharomyces cerevisiae (strain ATCC 204508 / S288c) (Baker's yeast).